The primary structure comprises 259 residues: Leucyl/phenylalanyl-tRNA--protein transferase (259 aa).

Belongs to the L/F-transferase family.

The protein localises to the cytoplasm. It catalyses the reaction N-terminal L-lysyl-[protein] + L-leucyl-tRNA(Leu) = N-terminal L-leucyl-L-lysyl-[protein] + tRNA(Leu) + H(+). The enzyme catalyses N-terminal L-arginyl-[protein] + L-leucyl-tRNA(Leu) = N-terminal L-leucyl-L-arginyl-[protein] + tRNA(Leu) + H(+). It carries out the reaction L-phenylalanyl-tRNA(Phe) + an N-terminal L-alpha-aminoacyl-[protein] = an N-terminal L-phenylalanyl-L-alpha-aminoacyl-[protein] + tRNA(Phe). In terms of biological role, functions in the N-end rule pathway of protein degradation where it conjugates Leu, Phe and, less efficiently, Met from aminoacyl-tRNAs to the N-termini of proteins containing an N-terminal arginine or lysine. The chain is Leucyl/phenylalanyl-tRNA--protein transferase from Teredinibacter turnerae (strain ATCC 39867 / T7901).